The sequence spans 302 residues: Segregation and condensation protein A (302 aa).

It belongs to the ScpA family. In terms of assembly, component of a cohesin-like complex composed of ScpA, ScpB and the Smc homodimer, in which ScpA and ScpB bind to the head domain of Smc. The presence of the three proteins is required for the association of the complex with DNA.

It localises to the cytoplasm. Its function is as follows. Participates in chromosomal partition during cell division. May act via the formation of a condensin-like complex containing Smc and ScpB that pull DNA away from mid-cell into both cell halves. This Xylella fastidiosa (strain Temecula1 / ATCC 700964) protein is Segregation and condensation protein A.